The sequence spans 416 residues: Choline/ethanolaminephosphotransferase 1 (416 aa).

The interval 1–20 (MSGHRSTRKRCGDSHPESPV) is disordered. Serine 18 carries the phosphoserine modification. Position 40 is a phosphothreonine (threonine 40). Asparagine 86 provides a ligand contact to CDP-choline. A run of 2 helical transmembrane segments spans residues 89-108 (TIIG…FYCP) and 116-133 (LWAY…QSLD). Aspartate 133 is a Mg(2+) binding site. Asparagine 144 is a glycosylation site (N-linked (GlcNAc...) asparagine). CDP-choline is bound at residue glutamate 151. Aspartate 154 contacts Mg(2+). Residue histidine 155 is the Proton acceptor of the active site. 8 helical membrane-spanning segments follow: residues 156–176 (GCDS…VQLG), 180–199 (DWMF…AHWQ), 210–230 (IIDV…AVIG), 246–267 (MKIF…NYFR), 286–306 (VLSP…IYKK), 315–334 (HPCL…TNKL), 349–363 (TAFI…DQYF), and 368–388 (DEYI…IRYC). Aspartate 158 is a binding site for Mg(2+).

This sequence belongs to the CDP-alcohol phosphatidyltransferase class-I family. As to quaternary structure, homodimer. Mg(2+) serves as cofactor. The cofactor is Mn(2+). In terms of tissue distribution, ubiquitously expressed.

It localises to the endoplasmic reticulum membrane. The protein localises to the nucleus membrane. The enzyme catalyses CDP-ethanolamine + a 1,2-diacyl-sn-glycerol = a 1,2-diacyl-sn-glycero-3-phosphoethanolamine + CMP + H(+). It catalyses the reaction CDP-choline + a 1,2-diacyl-sn-glycerol = a 1,2-diacyl-sn-glycero-3-phosphocholine + CMP + H(+). The catalysed reaction is 1-O-alkyl-2-acyl-sn-glycerol + CDP-choline = a 1-O-alkyl-2-acyl-sn-glycero-3-phosphocholine + CMP + H(+). It carries out the reaction a 1-O-(1Z-alkenyl)-2-acyl-sn-glycerol + CDP-choline = a 1-O-(1Z-alkenyl)-2-acyl-sn-glycero-3-phosphocholine + CMP + H(+). The enzyme catalyses 1,2-dioctanoyl-sn-glycerol + CDP-choline = 1,2-dioctanoyl-sn-glycero-3-phosphocholine + CMP + H(+). It catalyses the reaction 1,2-didecanoyl-sn-glycerol + CDP-choline = 1,2-didecanoyl-sn-glycero-3-phosphocholine + CMP + H(+). The catalysed reaction is CDP-choline + 1,2-di-(9Z-octadecenoyl)-sn-glycerol = 1,2-di-(9Z-octadecenoyl)-sn-glycero-3-phosphocholine + CMP + H(+). It carries out the reaction 1-hexadecanoyl-2-(9Z-octadecenoyl)-sn-glycerol + CDP-choline = 1-hexadecanoyl-2-(9Z-octadecenoyl)-sn-glycero-3-phosphocholine + CMP + H(+). The enzyme catalyses CDP-ethanolamine + 1,2-di-(9Z-octadecenoyl)-sn-glycerol = 1,2-di-(9Z-octadecenoyl)-sn-glycero-3-phosphoethanolamine + CMP + H(+). It catalyses the reaction 1-hexadecanoyl-2-(9Z-octadecenoyl)-sn-glycerol + CDP-ethanolamine = 1-hexadecanoyl-2-(9Z-octadecenoyl)-sn-glycero-3-phosphoethanolamine + CMP + H(+). The catalysed reaction is 1-hexadecanoyl-2-(4Z,7Z,10Z,13Z,16Z,19Z-docosahexaenoyl)-sn-glycerol + CDP-choline = 1-hexadecanoyl-2-(4Z,7Z,10Z,13Z,16Z,19Z-docosahexaenoyl)-sn-glycero-3-phosphocholine + CMP + H(+). It carries out the reaction 1,2-di-(9Z-hexadecenoyl)-sn-glycerol + CDP-choline = 1,2-di-(9Z-hexadecenoyl)-sn-glycero-3-phosphocholine + CMP + H(+). The enzyme catalyses 1,2-di-(9Z-hexadecenoyl)-sn-glycerol + CDP-ethanolamine = 1,2-di-(9Z-hexadecenoyl)-sn-glycero-3-phosphoethanolamine + CMP + H(+). It catalyses the reaction 1-O-hexadecyl-2-acetyl-sn-glycerol + CDP-choline = 1-O-hexadecyl-2-acetyl-sn-glycero-3-phosphocholine + CMP + H(+). The catalysed reaction is 1-O-hexadecyl-2-(5Z,8Z,11Z,14Z-eicosatetraenoyl)-sn-glycerol + CDP-choline = 1-O-hexadecyl-2-(5Z,8Z,11Z,14Z)-eicosatetraenoyl-sn-glycero-3-phosphocholine + CMP + H(+). It participates in phospholipid metabolism; phosphatidylethanolamine biosynthesis; phosphatidylethanolamine from ethanolamine: step 3/3. Its pathway is phospholipid metabolism; phosphatidylcholine biosynthesis; phosphatidylcholine from phosphocholine: step 2/2. Catalyzes both phosphatidylcholine and phosphatidylethanolamine biosynthesis from CDP-choline and CDP-ethanolamine, respectively. Involved in protein-dependent process of phospholipid transport to distribute phosphatidyl choline to the lumenal surface. Has a higher cholinephosphotransferase activity than ethanolaminephosphotransferase activity. The polypeptide is Choline/ethanolaminephosphotransferase 1 (Homo sapiens (Human)).